We begin with the raw amino-acid sequence, 464 residues long: CD-NTase-associated protein 4 (464 aa).

An N-terminal endonuclease domain region spans residues methionine 1–glutamate 228. The segment at glutamate 229 to isoleucine 464 is C-terminal SAVED domain.

Belongs to the Cap4 nuclease family. As to quaternary structure, a monomer in the absence of cAAA, in its presence it forms oligomers.

DNase activity is activated upon ligand binding. Functionally, effector DNase of a CBASS antivirus system. CBASS (cyclic oligonucleotide-based antiphage signaling system) provides immunity against bacteriophage. The CD-NTase protein synthesizes cyclic nucleotides in response to infection; these serve as specific second messenger signals. The signals activate a diverse range of effectors, leading to bacterial cell death and thus abortive phage infection. A type II-C CBASS system. Probably in the presence of its endogenous cyclic nucleotide (synthesized by the cognate CD-NTase protein in the CBASS operon), or of 2',3',3'-cyclic AMP-AMP-AMP (cAAA) synthesized by Acinetobacter sp. ATCC 27244, endonucleolytically degrades dsDNA in a non-sequence specific manner. It is not activated by other cyclic nucleotides. The protein is CD-NTase-associated protein 4 of Moraxella osloensis.